The sequence spans 188 residues: PRA1 family protein 3 (188 aa).

The residue at position 1 (Met1) is an N-acetylmethionine. Residues 1–35 are Cytoplasmic-facing; sequence MDVNIAPLRAWDDFFPGSDRFARPDFRDISKWNNR. Helical transmembrane passes span 36–56 and 57–77; these read VVSN…MMIS and VVGF…VLVF. Residues 78–93 lie on the Cytoplasmic side of the membrane; the sequence is TGFVWAAHNKDILRRL. 2 helical membrane-spanning segments follow: residues 94-114 and 115-135; these read KKQY…FLIS and MFGG…LMFI. Positions 103 to 117 are required for homodimer formation and heterodimer formation with ARL6IP1; it reads MVVMLASYFLISMFG. At 136–188 the chain is on the cytoplasmic side; sequence HASLRLRNLKNKLENKIEGIGLKRTPMGIVLDALEQQEENISKFADYISKVNE. Residues 136 to 188 are targeting to endoplasmic reticulum membrane; it reads HASLRLRNLKNKLENKIEGIGLKRTPMGIVLDALEQQEENISKFADYISKVNE.

It belongs to the PRA1 family. Homodimer. Heterodimer with ARL6IP1. Forms multimers. Interacts with ARL6. Interacts with prenylated RAB1A and RAB3A. Interacts with SLC1A1/EAAC1. Interacts with RTN2 (via first transmembrane domain). Does not interact with VAMP1, VAMP2 or VAMP3.

The protein resides in the endoplasmic reticulum membrane. It is found in the cell membrane. Its subcellular location is the cytoplasm. It localises to the cytoskeleton. Functionally, regulates intracellular concentrations of taurine and glutamate. Negatively modulates SLC1A1/EAAC1 glutamate transport activity by decreasing its affinity for glutamate in a PKC activity-dependent manner. Plays a role in the retention of SLC1A1/EAAC1 in the endoplasmic reticulum. This chain is PRA1 family protein 3 (ARL6IP5), found in Sus scrofa (Pig).